A 208-amino-acid polypeptide reads, in one-letter code: Dual specificity protein phosphatase 22-A (208 aa).

The Tyrosine-protein phosphatase domain maps to 4-144 (GMNKVIDGLY…LQEFQMKQVS (141 aa)). Cys88 serves as the catalytic Phosphocysteine intermediate.

This sequence belongs to the protein-tyrosine phosphatase family. Non-receptor class dual specificity subfamily.

The protein localises to the cytoplasm. The protein resides in the nucleus. It catalyses the reaction O-phospho-L-tyrosyl-[protein] + H2O = L-tyrosyl-[protein] + phosphate. It carries out the reaction O-phospho-L-seryl-[protein] + H2O = L-seryl-[protein] + phosphate. The catalysed reaction is O-phospho-L-threonyl-[protein] + H2O = L-threonyl-[protein] + phosphate. Functionally, activates the Jnk signaling pathway. Dephosphorylates and deactivates p38 and stress-activated protein kinase/c-Jun N-terminal kinase (SAPK/JNK). In Danio rerio (Zebrafish), this protein is Dual specificity protein phosphatase 22-A.